The following is a 497-amino-acid chain: Probable malate:quinone oxidoreductase (497 aa).

Belongs to the MQO family. The cofactor is FAD.

The enzyme catalyses (S)-malate + a quinone = a quinol + oxaloacetate. Its pathway is carbohydrate metabolism; tricarboxylic acid cycle; oxaloacetate from (S)-malate (quinone route): step 1/1. In Bacillus cereus (strain ATCC 14579 / DSM 31 / CCUG 7414 / JCM 2152 / NBRC 15305 / NCIMB 9373 / NCTC 2599 / NRRL B-3711), this protein is Probable malate:quinone oxidoreductase.